The chain runs to 371 residues: Aspartate-semialdehyde dehydrogenase (371 aa).

NADP(+)-binding positions include 9–12 (RGMV), 37–38 (TS), and Q73. R102 is a binding site for phosphate. Catalysis depends on C135, which acts as the Acyl-thioester intermediate. Q162 serves as a coordination point for substrate. NADP(+)-binding positions include 165–166 (SG) and P193. Position 241 (E241) interacts with substrate. A phosphate-binding site is contributed by K244. R268 is a substrate binding site. H275 serves as the catalytic Proton acceptor. Q351 provides a ligand contact to NADP(+).

This sequence belongs to the aspartate-semialdehyde dehydrogenase family. Homodimer.

The enzyme catalyses L-aspartate 4-semialdehyde + phosphate + NADP(+) = 4-phospho-L-aspartate + NADPH + H(+). The protein operates within amino-acid biosynthesis; L-lysine biosynthesis via DAP pathway; (S)-tetrahydrodipicolinate from L-aspartate: step 2/4. Its pathway is amino-acid biosynthesis; L-methionine biosynthesis via de novo pathway; L-homoserine from L-aspartate: step 2/3. It participates in amino-acid biosynthesis; L-threonine biosynthesis; L-threonine from L-aspartate: step 2/5. Functionally, catalyzes the NADPH-dependent formation of L-aspartate-semialdehyde (L-ASA) by the reductive dephosphorylation of L-aspartyl-4-phosphate. This Neisseria meningitidis serogroup A / serotype 4A (strain DSM 15465 / Z2491) protein is Aspartate-semialdehyde dehydrogenase.